Reading from the N-terminus, the 430-residue chain is Phosphomethylpyrimidine synthase (430 aa).

Residues Asn-67, Met-96, Tyr-125, His-161, Ser-183–Gly-185, Asp-224–Arg-227, and Glu-263 each bind substrate. A Zn(2+)-binding site is contributed by His-267. Residue Tyr-290 participates in substrate binding. Position 331 (His-331) interacts with Zn(2+). The [4Fe-4S] cluster site is built by Cys-406, Cys-409, and Cys-413.

The protein belongs to the ThiC family. As to quaternary structure, homodimer. Requires [4Fe-4S] cluster as cofactor.

It carries out the reaction 5-amino-1-(5-phospho-beta-D-ribosyl)imidazole + S-adenosyl-L-methionine = 4-amino-2-methyl-5-(phosphooxymethyl)pyrimidine + CO + 5'-deoxyadenosine + formate + L-methionine + 3 H(+). It participates in cofactor biosynthesis; thiamine diphosphate biosynthesis. In terms of biological role, catalyzes the synthesis of the hydroxymethylpyrimidine phosphate (HMP-P) moiety of thiamine from aminoimidazole ribotide (AIR) in a radical S-adenosyl-L-methionine (SAM)-dependent reaction. The chain is Phosphomethylpyrimidine synthase from Campylobacter jejuni subsp. jejuni serotype O:23/36 (strain 81-176).